The chain runs to 363 residues: Putative aryl-alcohol dehydrogenase AAD3 (363 aa).

This sequence belongs to the aldo/keto reductase family. Aldo/keto reductase 2 subfamily.

This chain is Putative aryl-alcohol dehydrogenase AAD3 (AAD3), found in Saccharomyces cerevisiae (strain ATCC 204508 / S288c) (Baker's yeast).